The chain runs to 470 residues: Siroheme synthase (470 aa).

The segment at methionine 1 to leucine 213 is precorrin-2 dehydrogenase /sirohydrochlorin ferrochelatase. NAD(+) contacts are provided by residues glycine 28–isoleucine 29 and proline 49–arginine 50. The segment at glycine 224 to threonine 470 is uroporphyrinogen-III C-methyltransferase. Proline 233 contacts S-adenosyl-L-methionine. Aspartate 256 acts as the Proton acceptor in catalysis. The active-site Proton donor is lysine 278. Residues glycine 309 to aspartate 311, isoleucine 314, threonine 339 to alanine 340, methionine 392, and glycine 421 contribute to the S-adenosyl-L-methionine site.

It in the N-terminal section; belongs to the precorrin-2 dehydrogenase / sirohydrochlorin ferrochelatase family. This sequence in the C-terminal section; belongs to the precorrin methyltransferase family.

The catalysed reaction is uroporphyrinogen III + 2 S-adenosyl-L-methionine = precorrin-2 + 2 S-adenosyl-L-homocysteine + H(+). The enzyme catalyses precorrin-2 + NAD(+) = sirohydrochlorin + NADH + 2 H(+). It carries out the reaction siroheme + 2 H(+) = sirohydrochlorin + Fe(2+). It functions in the pathway cofactor biosynthesis; adenosylcobalamin biosynthesis; precorrin-2 from uroporphyrinogen III: step 1/1. Its pathway is cofactor biosynthesis; adenosylcobalamin biosynthesis; sirohydrochlorin from precorrin-2: step 1/1. The protein operates within porphyrin-containing compound metabolism; siroheme biosynthesis; precorrin-2 from uroporphyrinogen III: step 1/1. It participates in porphyrin-containing compound metabolism; siroheme biosynthesis; siroheme from sirohydrochlorin: step 1/1. It functions in the pathway porphyrin-containing compound metabolism; siroheme biosynthesis; sirohydrochlorin from precorrin-2: step 1/1. Multifunctional enzyme that catalyzes the SAM-dependent methylations of uroporphyrinogen III at position C-2 and C-7 to form precorrin-2 via precorrin-1. Then it catalyzes the NAD-dependent ring dehydrogenation of precorrin-2 to yield sirohydrochlorin. Finally, it catalyzes the ferrochelation of sirohydrochlorin to yield siroheme. The chain is Siroheme synthase from Gluconacetobacter diazotrophicus (strain ATCC 49037 / DSM 5601 / CCUG 37298 / CIP 103539 / LMG 7603 / PAl5).